The chain runs to 369 residues: Cytokine receptor common subunit gamma (369 aa).

An N-terminal signal peptide occupies residues 1–22 (MLKLLLSPRSFLVLQLLLLRAG). Residues 23 to 263 (WSSKVLMSSA…ENPSLFALEA (241 aa)) are Extracellular-facing. C62 and C72 form a disulfide bridge. N71, N75, N84, and N96 each carry an N-linked (GlcNAc...) asparagine glycan. C102 and C115 are oxidised to a cystine. The region spanning 156–254 (APENLTLSNL…VHWGSHTVEE (99 aa)) is the Fibronectin type-III domain. N159 and N164 each carry an N-linked (GlcNAc...) asparagine glycan. Residues 238–242 (WSKWS) carry the WSXWS motif motif. Residues 264-284 (VLIPVGTMGLIITLIFVYCWL) traverse the membrane as a helical segment. Residues 285–369 (ERMPPIPPIK…PPCYSLKPEA (85 aa)) lie on the Cytoplasmic side of the membrane. Positions 286-294 (RMPPIPPIK) match the Box 1 motif motif.

The protein belongs to the type I cytokine receptor family. Type 5 subfamily. In terms of assembly, the gamma subunit is common to the IL2, IL4, IL7, IL15, IL21 and probably also the IL13 receptors. Interacts with SHB upon interleukin stimulation. Interacts with IL9.

Its subcellular location is the cell membrane. It localises to the cell surface. Its function is as follows. Common subunit for the receptors for a variety of interleukins. Probably in association with IL15RA, involved in the stimulation of neutrophil phagocytosis by IL15. This Mus musculus (Mouse) protein is Cytokine receptor common subunit gamma (Il2rg).